A 407-amino-acid chain; its full sequence is Monooxygenase 2 (407 aa).

The protein belongs to the 3-hydroxybenzoate 6-hydroxylase family. In terms of assembly, monomer. Requires FAD as cofactor. In terms of tissue distribution, expressed in seeds, seedlings, roots, leaves, flowers, pollen and siliques.

The protein is Monooxygenase 2 of Arabidopsis thaliana (Mouse-ear cress).